A 349-amino-acid chain; its full sequence is Hydroxymethylglutaryl-CoA synthase (349 aa).

A (3S)-3-hydroxy-3-methylglutaryl-CoA-binding site is contributed by D30. E82 acts as the Proton donor/acceptor in catalysis. (3S)-3-hydroxy-3-methylglutaryl-CoA is bound at residue C114. The active-site Acyl-thioester intermediate is C114. R203 serves as a coordination point for CoA. (3S)-3-hydroxy-3-methylglutaryl-CoA is bound by residues T205 and H238. Residue H238 is the Proton donor/acceptor of the active site. Position 243 (K243) interacts with CoA. Residues K247, N270, and S300 each contribute to the (3S)-3-hydroxy-3-methylglutaryl-CoA site.

Belongs to the thiolase-like superfamily. Archaeal HMG-CoA synthase family. Interacts with acetoacetyl-CoA thiolase that catalyzes the precedent step in the pathway and with a DUF35 protein. The acetoacetyl-CoA thiolase/HMG-CoA synthase complex channels the intermediate via a fused CoA-binding site, which allows for efficient coupling of the endergonic thiolase reaction with the exergonic HMGCS reaction.

It carries out the reaction acetoacetyl-CoA + acetyl-CoA + H2O = (3S)-3-hydroxy-3-methylglutaryl-CoA + CoA + H(+). It participates in metabolic intermediate biosynthesis; (R)-mevalonate biosynthesis; (R)-mevalonate from acetyl-CoA: step 2/3. Its function is as follows. Catalyzes the condensation of acetyl-CoA with acetoacetyl-CoA to form 3-hydroxy-3-methylglutaryl-CoA (HMG-CoA). Functions in the mevalonate (MVA) pathway leading to isopentenyl diphosphate (IPP), a key precursor for the biosynthesis of isoprenoid compounds that are building blocks of archaeal membrane lipids. This is Hydroxymethylglutaryl-CoA synthase from Methanothermococcus thermolithotrophicus (Methanococcus thermolithotrophicus).